Reading from the N-terminus, the 371-residue chain is Putative phosphoserine aminotransferase (371 aa).

An L-glutamate-binding site is contributed by Arg45. Pyridoxal 5'-phosphate contacts are provided by Phe103, Thr149, Asp171, and Gln194. Lys195 is modified (N6-(pyridoxal phosphate)lysine). 246 to 247 (NT) provides a ligand contact to pyridoxal 5'-phosphate.

This sequence belongs to the class-V pyridoxal-phosphate-dependent aminotransferase family. SerC subfamily. Homodimer. Pyridoxal 5'-phosphate serves as cofactor.

It localises to the cytoplasm. It catalyses the reaction O-phospho-L-serine + 2-oxoglutarate = 3-phosphooxypyruvate + L-glutamate. The catalysed reaction is 4-(phosphooxy)-L-threonine + 2-oxoglutarate = (R)-3-hydroxy-2-oxo-4-phosphooxybutanoate + L-glutamate. Its pathway is amino-acid biosynthesis; L-serine biosynthesis; L-serine from 3-phospho-D-glycerate: step 2/3. It functions in the pathway cofactor biosynthesis; pyridoxine 5'-phosphate biosynthesis; pyridoxine 5'-phosphate from D-erythrose 4-phosphate: step 3/5. Its function is as follows. Catalyzes the reversible conversion of 3-phosphohydroxypyruvate to phosphoserine and of 3-hydroxy-2-oxo-4-phosphonooxybutanoate to phosphohydroxythreonine. This chain is Putative phosphoserine aminotransferase, found in Mycolicibacterium vanbaalenii (strain DSM 7251 / JCM 13017 / BCRC 16820 / KCTC 9966 / NRRL B-24157 / PYR-1) (Mycobacterium vanbaalenii).